We begin with the raw amino-acid sequence, 275 residues long: MDERPVLFFDSGIGGLTVLREARVLIPEIQFIYVADDAGFPYGNWEENILKEHILNIFTNLLTRYNPALCVIACNTVSTLMMADLRQKFPHVPFVGTVPAIKSAAEQTKSGFISVLATPGTVKRAYTNELINSFAGQCHVQLVGSEKLAGFAEDHLRGKTIDSEALRKEILPCFVKKNGKCTDVIVLACTHYPFLINFFREQALWSVEWIDPAKAIAKHIRSLLPLSEKIHQKPIKKYQDFALLTSKNITASTEHLLKGFGLKLMKRVDFRIRDQ.

Substrate contacts are provided by residues 10–11 (DS) and 42–43 (YG). Cys74 acts as the Proton donor/acceptor in catalysis. Residue 75-76 (NT) coordinates substrate. Cys189 serves as the catalytic Proton donor/acceptor. Residue 190-191 (TH) participates in substrate binding.

Belongs to the aspartate/glutamate racemases family.

It carries out the reaction L-glutamate = D-glutamate. It functions in the pathway cell wall biogenesis; peptidoglycan biosynthesis. Functionally, provides the (R)-glutamate required for cell wall biosynthesis. This is Glutamate racemase from Bartonella tribocorum (strain CIP 105476 / IBS 506).